Here is a 563-residue protein sequence, read N- to C-terminus: Tripeptidyl-peptidase 1 (563 aa).

The signal sequence occupies residues Met1–Cys19. Positions Thr20 to Gly195 are cleaved as a propeptide — removed in mature form. Cys111 and Cys122 are disulfide-bonded. In terms of domain architecture, Peptidase S53 spans Gly199–Pro563. N-linked (GlcNAc...) asparagine glycans are attached at residues Asn210 and Asn222. Active-site charge relay system residues include Glu272 and Asp276. N-linked (GlcNAc...) asparagine glycosylation is found at Asn286, Asn313, and Asn443. Intrachain disulfides connect Cys365–Cys526 and Cys522–Cys537. The Charge relay system role is filled by Ser475. Asp517 and Val518 together coordinate Ca(2+). The Ca(2+) site is built by Gly539, Gly541, and Asp543.

In terms of assembly, monomer. Interacts with CLN5. Interacts with CLN3. It depends on Ca(2+) as a cofactor. Post-translationally, activated by autocatalytic proteolytical processing upon acidification. N-glycosylation is required for processing and activity.

The protein resides in the lysosome. Its subcellular location is the melanosome. The catalysed reaction is Release of an N-terminal tripeptide from a polypeptide, but also has endopeptidase activity.. Functionally, lysosomal serine protease with tripeptidyl-peptidase I activity. May act as a non-specific lysosomal peptidase which generates tripeptides from the breakdown products produced by lysosomal proteinases. Requires substrates with an unsubstituted N-terminus. The polypeptide is Tripeptidyl-peptidase 1 (Tpp1) (Rattus norvegicus (Rat)).